Consider the following 397-residue polypeptide: Acetate kinase (397 aa).

Residue N8 coordinates Mg(2+). Position 15 (K15) interacts with ATP. R90 contacts substrate. The Proton donor/acceptor role is filled by D147. Residues 207–211 (HLGAG), 283–285 (DMR), and 330–334 (GVGEN) each bind ATP. Position 383 (E383) interacts with Mg(2+).

This sequence belongs to the acetokinase family. In terms of assembly, homodimer. It depends on Mg(2+) as a cofactor. The cofactor is Mn(2+).

The protein localises to the cytoplasm. The enzyme catalyses acetate + ATP = acetyl phosphate + ADP. It participates in metabolic intermediate biosynthesis; acetyl-CoA biosynthesis; acetyl-CoA from acetate: step 1/2. In terms of biological role, catalyzes the formation of acetyl phosphate from acetate and ATP. Can also catalyze the reverse reaction. The polypeptide is Acetate kinase (Fructilactobacillus sanfranciscensis (Lactobacillus sanfranciscensis)).